We begin with the raw amino-acid sequence, 670 residues long: DNA ligase (670 aa).

NAD(+) is bound by residues 32–36, 81–82, and Glu114; these read DSEYD and SL. Lys116 serves as the catalytic N6-AMP-lysine intermediate. NAD(+) is bound by residues Arg137, Glu174, Lys291, and Lys315. Residues Cys409, Cys412, Cys427, and Cys433 each contribute to the Zn(2+) site. The 79-residue stretch at 592–670 folds into the BRCT domain; it reads ASENLFKDKT…EEEFLAQITR (79 aa).

Belongs to the NAD-dependent DNA ligase family. LigA subfamily. The cofactor is Mg(2+). Mn(2+) serves as cofactor.

It catalyses the reaction NAD(+) + (deoxyribonucleotide)n-3'-hydroxyl + 5'-phospho-(deoxyribonucleotide)m = (deoxyribonucleotide)n+m + AMP + beta-nicotinamide D-nucleotide.. Functionally, DNA ligase that catalyzes the formation of phosphodiester linkages between 5'-phosphoryl and 3'-hydroxyl groups in double-stranded DNA using NAD as a coenzyme and as the energy source for the reaction. It is essential for DNA replication and repair of damaged DNA. The sequence is that of DNA ligase from Haemophilus influenzae (strain PittGG).